Reading from the N-terminus, the 475-residue chain is Ribulose bisphosphate carboxylase large chain (475 aa).

Residues 1–2 (MS) constitute a propeptide that is removed on maturation. Position 3 is an N-acetylproline (P3). At K14 the chain carries N6,N6,N6-trimethyllysine. Residues N123 and T173 each coordinate substrate. The active-site Proton acceptor is K175. K177 is a substrate binding site. K201, D203, and E204 together coordinate Mg(2+). K201 bears the N6-carboxylysine mark. H294 acts as the Proton acceptor in catalysis. Positions 295, 327, and 379 each coordinate substrate.

Belongs to the RuBisCO large chain family. Type I subfamily. In terms of assembly, heterohexadecamer of 8 large chains and 8 small chains; disulfide-linked. The disulfide link is formed within the large subunit homodimers. It depends on Mg(2+) as a cofactor. The disulfide bond which can form in the large chain dimeric partners within the hexadecamer appears to be associated with oxidative stress and protein turnover.

It localises to the plastid. Its subcellular location is the chloroplast. The catalysed reaction is 2 (2R)-3-phosphoglycerate + 2 H(+) = D-ribulose 1,5-bisphosphate + CO2 + H2O. It catalyses the reaction D-ribulose 1,5-bisphosphate + O2 = 2-phosphoglycolate + (2R)-3-phosphoglycerate + 2 H(+). Its function is as follows. RuBisCO catalyzes two reactions: the carboxylation of D-ribulose 1,5-bisphosphate, the primary event in carbon dioxide fixation, as well as the oxidative fragmentation of the pentose substrate in the photorespiration process. Both reactions occur simultaneously and in competition at the same active site. This chain is Ribulose bisphosphate carboxylase large chain, found in Fagopyrum esculentum subsp. ancestrale (Wild buckwheat).